The following is a 218-amino-acid chain: Octanoyltransferase (218 aa).

The region spanning 31–206 is the BPL/LPL catalytic domain; the sequence is REAADEVWLV…QLVKHLDYAE (176 aa). Residues 70–77, 137–139, and 150–152 each bind substrate; these read RGGQVTYH, SLG, and GLA. C168 serves as the catalytic Acyl-thioester intermediate.

The protein belongs to the LipB family.

Its subcellular location is the cytoplasm. It catalyses the reaction octanoyl-[ACP] + L-lysyl-[protein] = N(6)-octanoyl-L-lysyl-[protein] + holo-[ACP] + H(+). The protein operates within protein modification; protein lipoylation via endogenous pathway; protein N(6)-(lipoyl)lysine from octanoyl-[acyl-carrier-protein]: step 1/2. Its function is as follows. Catalyzes the transfer of endogenously produced octanoic acid from octanoyl-acyl-carrier-protein onto the lipoyl domains of lipoate-dependent enzymes. Lipoyl-ACP can also act as a substrate although octanoyl-ACP is likely to be the physiological substrate. The chain is Octanoyltransferase from Pseudomonas syringae pv. syringae (strain B728a).